We begin with the raw amino-acid sequence, 97 residues long: Co-chaperonin GroES (97 aa).

It belongs to the GroES chaperonin family. In terms of assembly, heptamer of 7 subunits arranged in a ring. Interacts with the chaperonin GroEL.

The protein localises to the cytoplasm. Its function is as follows. Together with the chaperonin GroEL, plays an essential role in assisting protein folding. The GroEL-GroES system forms a nano-cage that allows encapsulation of the non-native substrate proteins and provides a physical environment optimized to promote and accelerate protein folding. GroES binds to the apical surface of the GroEL ring, thereby capping the opening of the GroEL channel. This Burkholderia cepacia (Pseudomonas cepacia) protein is Co-chaperonin GroES.